Here is a 399-residue protein sequence, read N- to C-terminus: MNMARDIWFETVAIAQQRARKRLPKSVYSSLISASEKGVTVTDNVESFAELGFAPHVVGAPEKRDMATTVMGQQISLPVIISPTGVQAVHPDGEVAVARAAAARGTAMGLSSFASKPIEEVVAVNDKIFFQIYWLGDRDAILARAERAKAAGAVGLIVTTDWSFSHGRDWGSPKIPEKMDLKTMVTMMPEALTKPRWLWQWGKTMRPPNLRVPNQGARGEDGPPFFQAYGEWMGTPPPTWEDIAWLREQWDGPFMLKGVIRVDDAKRAVDAGVSAISVSNHGGNNLDGTPAAIRALPVIAEAVGDQVEVLLDGGIRRGSDVVKAVALGARAVMIGRAYLWGLAAEGQVGVENVLDILRGGIDSALMGLGRSSIHDLVPEDILVPEGFTRALGVPPASGS.

Positions 4-386 constitute an FMN hydroxy acid dehydrogenase domain; that stretch reads ARDIWFETVA…VPEDILVPEG (383 aa). Positions 111 and 131 each coordinate FMN. Tyr-133 is a binding site for a 2-oxocarboxylate. An FMN-binding site is contributed by Thr-159. Arg-168 lines the a 2-oxocarboxylate pocket. An FMN-binding site is contributed by Lys-257. His-281 functions as the Proton acceptor in the catalytic mechanism. Residues 312-316 and 335-336 contribute to the FMN site; these read DGGIR and GR.

It belongs to the FMN-dependent alpha-hydroxy acid dehydrogenase family. The cofactor is FMN.

It carries out the reaction 3-amino-5-[(4-hydroxyphenyl)methyl]-4,4-dimethyl-2-pyrrolidin-2-one + O2 + H2O = pre-mycofactocin + H2O2 + NH4(+). Involved in the biosynthesis of the enzyme cofactor mycofactocin (MFT). Catalyzes the oxidative deamination of AHDP (3-amino-5-[(4-hydroxyphenyl)methyl]-4,4-dimethyl-2-pyrrolidin-2-one), forming an alpha-keto amide moiety on the resulting molecule, which is called pre-mycofactocin (PMFT). This reaction occurs via a 5-[(4-hydroxyphenyl)methyl]-3-imino-4,4-dimethylpyrrolidin-2-one intermediate, which converts to PMFT. The alpha-keto amide moiety is the redox-active center for the redox activity of mycofactocin. Is required for the in vivo ethanol assimilation in M.smegmatis. This is Pre-mycofactocin synthase from Mycolicibacterium smegmatis (strain ATCC 700084 / mc(2)155) (Mycobacterium smegmatis).